The following is a 284-amino-acid chain: HTH-type transcriptional activator RhaR (284 aa).

One can recognise an HTH araC/xylS-type domain in the interval 181–279 (DMLMNALRAS…GVSPSAYRQR (99 aa)). 2 consecutive DNA-binding regions (H-T-H motif) follow at residues 198–219 (EAFC…KEQT) and 246–269 (IGDI…HQAF).

As to quaternary structure, binds DNA as a dimer.

Its subcellular location is the cytoplasm. In terms of biological role, activates expression of the rhaSR operon in response to L-rhamnose. This Pectobacterium carotovorum subsp. carotovorum (strain PC1) protein is HTH-type transcriptional activator RhaR.